The following is a 522-amino-acid chain: Cytochrome P450 monooxygenase sirB (522 aa).

Residues 22-42 (ASAILFCTLLTVFLFISQGTV) form a helical membrane-spanning segment. A glycan (N-linked (GlcNAc...) asparagine) is linked at Asn-191. A helical membrane pass occupies residues 304–324 (VLHLSFAATGTVAILITHMIY). Cys-462 contributes to the heme binding site.

It belongs to the cytochrome P450 family. Heme is required as a cofactor.

The protein localises to the membrane. Its pathway is mycotoxin biosynthesis. In terms of biological role, cytochrome P450 monooxygenase; part of the gene cluster that mediates the biosynthesis of sirodesmin PL, an epipolythiodioxopiperazine (ETP) characterized by a disulfide bridged cyclic dipeptide and that acts as a phytotoxin which is involved in the blackleg didease of canola. SirD catalyzes the O-prenylation of L-tyrosine (L-Tyr) in the presence of dimethylallyl diphosphate (DMAPP) to yield 4-O-dimethylallyl-L-Tyr, and therefore represents probably the first pathway-specific enzyme in the biosynthesis of sirodesmin PL. 4-O-dimethylallyl-L-Tyr, then undergoes condensation with L-Ser in a reaction catalyzed by the non-ribosomal peptide synthase sirP to form the diketopiperazine (DKP) backbone. Further bishydroxylation of the DKP performed by the cytochrome P450 monooxygenase sirC leads to the production of the intermediate phomamide. This step is essential to form the reactive thiol group required for toxicity of sirodesmin PL. The next steps of sirodesmin biosynthesis are not well understood yet, but some predictions could be made from intermediate compounds identification. Phomamide is converted into phomalizarine via oxidation, probably by sirT. Further oxidation, methylation (by sirM or sirN) and reduction steps convert phomalizarine to deacetyl sirodesmin. Finally, acetyltransferase sirH probably acetylates deacetyl sirodesmin to produce sirodesmin PL. The polypeptide is Cytochrome P450 monooxygenase sirB (Leptosphaeria maculans (Blackleg fungus)).